A 313-amino-acid polypeptide reads, in one-letter code: 3'-5' exoribonuclease YhaM (313 aa).

The HD domain maps to His-163–Ser-279.

This sequence belongs to the YhaM family.

Shows a 3'-5' exoribonuclease activity. This chain is 3'-5' exoribonuclease YhaM, found in Listeria welshimeri serovar 6b (strain ATCC 35897 / DSM 20650 / CCUG 15529 / CIP 8149 / NCTC 11857 / SLCC 5334 / V8).